Consider the following 78-residue polypeptide: Large ribosomal subunit protein bL28 (78 aa).

The protein belongs to the bacterial ribosomal protein bL28 family.

The protein is Large ribosomal subunit protein bL28 of Leifsonia xyli subsp. xyli (strain CTCB07).